Here is an 803-residue protein sequence, read N- to C-terminus: Ras GTPase-activating protein 4 (803 aa).

C2 domains are found at residues 1-105 (MAKR…SGWA) and 116-232 (VQGE…EGWF). Positions 21, 27, 74, 76, 79, 82, 149, 155, 202, 204, 207, and 210 each coordinate Ca(2+). A Ras-GAP domain is found at 318 to 546 (GLAKDFLDLL…AQLKDFITKL (229 aa)). Residues 566-673 (PPVKEGPLFI…WLSALRKVSI (108 aa)) enclose the PH domain. The Btk-type zinc finger occupies 675–711 (NTGLLGSYHPGVFRGDKWSCCHQKEKTGQGCDKTRSR). The Zn(2+) site is built by His-683, Cys-694, Cys-695, and Cys-705. The disordered stretch occupies residues 781–803 (EAHSSSPAGSPPSEPNCLLELQT).

Ca(2+) serves as cofactor. In terms of tissue distribution, widely expressed.

The protein resides in the cytoplasm. The protein localises to the cytosol. Its subcellular location is the cell membrane. Functionally, ca(2+)-dependent Ras GTPase-activating protein, that switches off the Ras-MAPK pathway following a stimulus that elevates intracellular calcium. Functions as an adaptor for Cdc42 and Rac1 during FcR-mediated phagocytosis. The sequence is that of Ras GTPase-activating protein 4 (RASA4) from Homo sapiens (Human).